Here is a 307-residue protein sequence, read N- to C-terminus: Probable aspartoacylase (307 aa).

Residues H13 and E16 each coordinate Zn(2+). Substrate-binding positions include R55 and 62-63; that span reads NR. Residue H105 participates in Zn(2+) binding. The substrate site is built by E163 and Y276.

It belongs to the AspA/AstE family. Aspartoacylase subfamily. Zn(2+) serves as cofactor.

The catalysed reaction is an N-acyl-L-aspartate + H2O = a carboxylate + L-aspartate. The chain is Probable aspartoacylase from Prochlorococcus marinus (strain SARG / CCMP1375 / SS120).